Here is a 315-residue protein sequence, read N- to C-terminus: tRNA-dihydrouridine(16) synthase (315 aa).

Residues 7–9 (PME) and Q68 each bind FMN. C98 (proton donor) is an active-site residue. FMN contacts are provided by residues K139, 199-201 (NGE), and 223-224 (GR).

It belongs to the Dus family. DusC subfamily. The cofactor is FMN.

The enzyme catalyses 5,6-dihydrouridine(16) in tRNA + NADP(+) = uridine(16) in tRNA + NADPH + H(+). The catalysed reaction is 5,6-dihydrouridine(16) in tRNA + NAD(+) = uridine(16) in tRNA + NADH + H(+). In terms of biological role, catalyzes the synthesis of 5,6-dihydrouridine (D), a modified base found in the D-loop of most tRNAs, via the reduction of the C5-C6 double bond in target uridines. Specifically modifies U16 in tRNAs. This is tRNA-dihydrouridine(16) synthase from Aquipseudomonas alcaligenes (Pseudomonas alcaligenes).